The chain runs to 538 residues: MLSKRIVTALNTAVKVQNAGIATTARGMAGASGSEVSKILEERILGTETGINLEETGKVLSIGDGIARVYGLKNIQAEEMVEFDSGIKGMAMNLDVDNVGVVVFGNDKVIREGDIVKRTGAIVDVPVGDGLLGRVVDALGNPIDGKGPIANARRSRVEVKAPGIIPRLSVREPMVTGVKAVDSLVPIGRGQRELIIGDRQTGKTAIAIDTIINQKRFNDAGDDKKKLFCIYVAVGQKRSTVAQIVKRLTDAGAMDYTIVVSATASDAAPLQFLAPYSGCAMGEHFRDNGKHALIIFDDLSKQAVAYRQMSLLLRRPPGREAYPGDVFYLHSRLLERAAKMNNSLGGGSLTALPVIETQAGDVSAYIPTNVISITDGQIFLETELFYKGVRPAINVGLSVSRVGSAAQTKAMKQVAGSMKLELAQYREVAAFAQFGSDLDASTQQLLNRGVRLTELLKQGQYVPMGIEEQVGVIYAGVKGYLDKVDPSAITKFEKEFLAHLRSSQQALLKTIREEGQISPQTDAQLKDVVVNFLATFKP.

Position 197-204 (197-204 (GDRQTGKT)) interacts with ATP. Residues 228–248 (FCIYVAVGQKRSTVAQIVKRL) are essential and sufficient for enterobactin binding.

This sequence belongs to the ATPase alpha/beta chains family. Subunit of the F-type ATPase which has 2 components, CF(1) - the catalytic core - and CF(0) - the membrane proton channel. Ubiquitous (at protein level).

It is found in the mitochondrion. It localises to the mitochondrion inner membrane. Its function is as follows. Mitochondrial membrane ATP synthase (F(1)F(0) ATP synthase or Complex V) produces ATP from ADP in the presence of a proton gradient across the membrane which is generated by electron transport complexes of the respiratory chain. F-type ATPases consist of two structural domains, F(1) - containing the extramembraneous catalytic core, and F(0) - containing the membrane proton channel, linked together by a central stalk and a peripheral stalk. During catalysis, ATP synthesis in the catalytic domain of F(1) is coupled via a rotary mechanism of the central stalk subunits to proton translocation. Subunits alpha and beta form the catalytic core in F(1). Rotation of the central stalk against the surrounding subunits leads to hydrolysis of ATP in three separate catalytic sites on the beta subunits. Subunit alpha does not bear the catalytic high-affinity ATP-binding sites. Binds the bacterial siderophore enterobactin and is required for the assimilation of enterobactin-bound iron from non-pathogenic bacteria. Promotes mitochondrial accumulation of enterobactin-derived iron ions. This chain is ATP synthase subunit alpha, mitochondrial, found in Caenorhabditis elegans.